Here is a 279-residue protein sequence, read N- to C-terminus: Tryptophan synthase alpha chain (279 aa).

Active-site proton acceptor residues include Glu50 and Asp61.

Belongs to the TrpA family. In terms of assembly, tetramer of two alpha and two beta chains.

It carries out the reaction (1S,2R)-1-C-(indol-3-yl)glycerol 3-phosphate + L-serine = D-glyceraldehyde 3-phosphate + L-tryptophan + H2O. Its pathway is amino-acid biosynthesis; L-tryptophan biosynthesis; L-tryptophan from chorismate: step 5/5. Its function is as follows. The alpha subunit is responsible for the aldol cleavage of indoleglycerol phosphate to indole and glyceraldehyde 3-phosphate. In Rhizobium rhizogenes (strain K84 / ATCC BAA-868) (Agrobacterium radiobacter), this protein is Tryptophan synthase alpha chain.